The sequence spans 193 residues: Imidazoleglycerol-phosphate dehydratase (193 aa).

The protein belongs to the imidazoleglycerol-phosphate dehydratase family.

Its subcellular location is the cytoplasm. It catalyses the reaction D-erythro-1-(imidazol-4-yl)glycerol 3-phosphate = 3-(imidazol-4-yl)-2-oxopropyl phosphate + H2O. It functions in the pathway amino-acid biosynthesis; L-histidine biosynthesis; L-histidine from 5-phospho-alpha-D-ribose 1-diphosphate: step 6/9. In Metallosphaera sedula (strain ATCC 51363 / DSM 5348 / JCM 9185 / NBRC 15509 / TH2), this protein is Imidazoleglycerol-phosphate dehydratase.